The chain runs to 259 residues: Glucose-1-phosphate thymidylyltransferase (259 aa).

It belongs to the inositol monophosphatase superfamily.

It carries out the reaction dTTP + alpha-D-glucose 1-phosphate + H(+) = dTDP-alpha-D-glucose + diphosphate. It participates in antibiotic biosynthesis; streptomycin biosynthesis. This chain is Glucose-1-phosphate thymidylyltransferase (strO), found in Streptomyces griseus.